A 219-amino-acid polypeptide reads, in one-letter code: Small ribosomal subunit protein uS3c (219 aa).

In terms of domain architecture, KH type-2 spans 39 to 111 (IRKFLMEKIK…NSFFNVKINF (73 aa)).

This sequence belongs to the universal ribosomal protein uS3 family. Part of the 30S ribosomal subunit.

The protein localises to the plastid. This is Small ribosomal subunit protein uS3c (rps3) from Euglena longa (Euglenophycean alga).